The sequence spans 463 residues: L-seryl-tRNA(Sec) selenium transferase (463 aa).

At Lys295 the chain carries N6-(pyridoxal phosphate)lysine.

It belongs to the SelA family. In terms of assembly, homodecamer; pentamer of dimers. Binds only one seryl-tRNA(Sec) per dimer. Pyridoxal 5'-phosphate serves as cofactor.

It is found in the cytoplasm. It catalyses the reaction L-seryl-tRNA(Sec) + selenophosphate + H(+) = L-selenocysteinyl-tRNA(Sec) + phosphate. It functions in the pathway aminoacyl-tRNA biosynthesis; selenocysteinyl-tRNA(Sec) biosynthesis; selenocysteinyl-tRNA(Sec) from L-seryl-tRNA(Sec) (bacterial route): step 1/1. Converts seryl-tRNA(Sec) to selenocysteinyl-tRNA(Sec) required for selenoprotein biosynthesis. This Salmonella enteritidis PT4 (strain P125109) protein is L-seryl-tRNA(Sec) selenium transferase.